The sequence spans 465 residues: MDNTSSVPWASAASVTCLSLDAKCHSSSAKSAASSISASPETQAMRHIAHTQRCLSRLTSLVALLLIVLPMTFSPAHSCGPGRGLGRHRARNLYPLVLKQTIPNLSEYTNSASGPLEGVIRRDSPKFKDLVPNYNRDILFRDEEGTGADRLMSKRCREKLNLLAYSVMNEWPGIRLLVTESWDEDYHHGQESLHYEGRAVTIATSDRDQSKYGMLARLAVEAGFDWVSYVSRRHIYCSVKSDSSISSHVHGCFTPESTALLENGVRKPLGELSIGDRVLSMTANGQAVYSEVILFMDRNLEQMQNFVQLHTDGEAVLTVTPAHLVSVWQAESQKLTFVFADRVEEKNQVLVRDVETGELRPQRVVKVGSVRSKGVVAPLTREGTIVVNSVAASCYAVINSQSLAHWGLAPMRLLSTLEAWLPAKEQLHSSPKVVTTAEQQNGIHWYANALYKVKDYVLPQSWRHD.

Cysteine 79 carries N-palmitoyl cysteine lipidation. Positions 143, 144, 149, 179, 180, 183, and 185 each coordinate Ca(2+). Glycine 251 carries Cholesterol glycine ester lipidation.

The protein belongs to the hedgehog family. Interacts with shf. In terms of processing, the C-terminal part of the hedgehog protein precursor displays an autoproteolysis activity that results in the cleavage of the full-length protein into two parts (N-product and C-product). In addition, the C-terminal part displays a cholesterol transferase activity that results by the covalent attachment of a cholesterol moiety to the C-terminal of the newly generated N-product. The N-product is the active species in both local and long-range signaling, whereas the C-product has no signaling activity. Cholesterylation is required for N-product targeting to lipid rafts and multimerization. Post-translationally, N-palmitoylation by Rasp of the hedgehog N-product, within the secretory pathway, is required for the embryonic and larval patterning activities of the hedgehog signal.

It localises to the nucleus. The protein localises to the cytoplasm. It is found in the cell membrane. The enzyme catalyses glycyl-L-cysteinyl-[protein] + cholesterol + H(+) = [protein]-C-terminal glycyl cholesterol ester + N-terminal L-cysteinyl-[protein]. Its function is as follows. The C-terminal part of the hedgehog protein precursor displays an autoproteolysis activity that results in the cleavage of the full-length protein into two parts (N-product and C-product). In addition, the C-terminal part displays a cholesterol transferase activity that results by the covalent attachment of a cholesterol moiety to the C-terminal of the newly generated N-product. Once cleaved, the C-product has no signaling activity and diffuses from the cell. Functionally, the dually lipidated hedgehog protein N-product is a morphogen which is essential for a variety of patterning events during development. Establishes the anterior-posterior axis of the embryonic segments and patterns the larval imaginal disks. Binds to the patched (ptc) receptor, which functions in association with smoothened (smo), to activate the transcription of target genes wingless (wg), decapentaplegic (dpp) and ptc. In the absence of hh, ptc represses the constitutive signaling activity of smo through fused (fu). Essential component of a signaling pathway which regulates the Duox-dependent gut immune response to bacterial uracil; required to activate Cad99C-dependent endosome formation, norpA-dependent Ca2+ mobilization and p38 MAPK, which are essential steps in the Duox-dependent production of reactive oxygen species (ROS) in response to intestinal bacterial infection. During photoreceptor differentiation, it up-regulates transcription of Ubr3, which in turn promotes the hh-signaling pathway by mediating the ubiquitination and degradation of cos. The sequence is that of Protein hedgehog from Drosophila erecta (Fruit fly).